Consider the following 251-residue polypeptide: Triosephosphate isomerase (251 aa).

Substrate is bound by residues Asn-10 and Lys-12. The Electrophile role is filled by His-95. The active-site Proton acceptor is Glu-167.

This sequence belongs to the triosephosphate isomerase family. Homodimer.

The catalysed reaction is D-glyceraldehyde 3-phosphate = dihydroxyacetone phosphate. It participates in carbohydrate biosynthesis; gluconeogenesis. Its pathway is carbohydrate degradation; glycolysis; D-glyceraldehyde 3-phosphate from glycerone phosphate: step 1/1. The polypeptide is Triosephosphate isomerase (TPI) (Coprinopsis cinerea (strain Okayama-7 / 130 / ATCC MYA-4618 / FGSC 9003) (Inky cap fungus)).